The chain runs to 308 residues: HPr kinase/phosphorylase (308 aa).

Residues His136 and Lys157 contribute to the active site. 151–158 (GESGIGKS) is a binding site for ATP. Ser158 lines the Mg(2+) pocket. Asp175 acts as the Proton acceptor; for phosphorylation activity. Proton donor; for dephosphorylation activity in catalysis. Residues 198-207 (IEVRGMGIID) form an important for the catalytic mechanism of both phosphorylation and dephosphorylation region. Glu199 lines the Mg(2+) pocket. Arg240 is an active-site residue. The important for the catalytic mechanism of dephosphorylation stretch occupies residues 261-266 (PIRPGR).

This sequence belongs to the HPrK/P family. Homohexamer. Mg(2+) serves as cofactor.

It carries out the reaction [HPr protein]-L-serine + ATP = [HPr protein]-O-phospho-L-serine + ADP + H(+). It catalyses the reaction [HPr protein]-O-phospho-L-serine + phosphate + H(+) = [HPr protein]-L-serine + diphosphate. Its function is as follows. Catalyzes the ATP- as well as the pyrophosphate-dependent phosphorylation of a specific serine residue in HPr, a phosphocarrier protein of the phosphoenolpyruvate-dependent sugar phosphotransferase system (PTS). HprK/P also catalyzes the pyrophosphate-producing, inorganic phosphate-dependent dephosphorylation (phosphorolysis) of seryl-phosphorylated HPr (P-Ser-HPr). The two antagonistic activities of HprK/P are regulated by several intracellular metabolites, which change their concentration in response to the absence or presence of rapidly metabolisable carbon sources (glucose, fructose, etc.) in the growth medium. Therefore, by controlling the phosphorylation state of HPr, HPrK/P is a sensor enzyme that plays a major role in the regulation of carbon metabolism and sugar transport: it mediates carbon catabolite repression (CCR), and regulates PTS-catalyzed carbohydrate uptake and inducer exclusion. The sequence is that of HPr kinase/phosphorylase from Clostridium kluyveri (strain NBRC 12016).